The sequence spans 514 residues: Myocyte-specific enhancer factor 2D (514 aa).

In terms of domain architecture, MADS-box spans 3 to 57 (RKKIQIQRITDERNRQVTFTKRKFGLMKKAYELSVLCDCEIALIIFNHSNKLFQY). A DNA-binding region (mef2-type) is located at residues 58 to 86 (ASTDMDKVLLKYTEYNEPHESRTNADIIE). Asp-97, Ser-98, and Ser-106 each carry phosphoserine. Leu-107 bears the Phosphothreonine mark. Ser-110 bears the Phosphoserine mark. Position 121 is a phosphoserine; by PKA (Ser-121). The interval 174 to 207 (TDPRLLSPQQPALQRNSVSPGLPQRPASAGAMLG) is disordered. Residue Ser-180 is modified to Phosphoserine; by MAPK7. Positions 180–192 (SPQQPALQRNSVS) are enriched in polar residues. Ser-190 bears the Phosphoserine; by PKA mark. Position 231 is a phosphoserine (Ser-231). The tract at residues 244–269 (NKVIPAKSPPPPTHNTQLGAPSRKPD) is disordered. Lys-245 carries the N6-acetyllysine modification. Ser-251 is modified (phosphoserine). The segment at 286 to 292 (TEDHLDL) is beta domain. 2 disordered regions span residues 364-399 (WQQPQPPQQPQPPQPPQSQPQPPQPQPQQPPQQQPH) and 430-514 (SIKS…WTLK). Over residues 367 to 396 (PQPPQQPQPPQPPQSQPQPPQPQPQQPPQQ) the composition is skewed to pro residues. Residue Lys-432 is modified to N6-acetyllysine; alternate. Residue Lys-432 forms a Glycyl lysine isopeptide (Lys-Gly) (interchain with G-Cter in SUMO); alternate linkage. A Phosphoserine modification is found at Ser-437.

It belongs to the MEF2 family. As to quaternary structure, forms a complex with class II HDACs in undifferentiating cells. On myogenic differentiation, HDACs are released into the cytoplasm allowing MEF2s to interact with other proteins for activation. Interacts with HDAC4 (in undifferentiating cells); the interaction translocates MEF2D to nuclear dots. Forms a heterodimer with MEF2A. Interacts with MAPK7; the interaction phosphorylates but does not activate MEF2D. Interacts with MYOG. Interacts with CCAR2 and HDAC3. In terms of processing, phosphorylated on Ser-437 is which is required for Lys-432 sumoylation and inhibits transcriptional activity. Phosphorylation on this residue by CDK5 is dependent on p35 and calpains. Phosphorylated by PKA at Ser-121 and Ser-190 represses transcriptional activity in embryonic and postnatal skeletal muscle, and stabilizes protein levels. No in vitro phosphorylation by PKA on Thr-20. Phosphorylated and activated by CaMK4. Post-translationally, acetylated on Lys-432 by CREBBP. Acetylated by EP300. Deacetylated by SIRT1 and HDAC3. Sumoylated on Lys-432 with SUMO2 but not SUMO1; which inhibits transcriptional activity and myogenic activity. Desumoylated by SENP3. In terms of processing, proteolytically cleaved in cerebellar granule neurons by caspase 7 following neurotoxicity. Preferentially cleaves the CDK5-mediated hyperphosphorylated form which leads to neuron apoptosis and transcriptional inactivation. In terms of tissue distribution, widely expressed though mainly restricted to skeletal and cardiac muscle, brain, neurons and lymphocytes. Differentially expressed depending on if isoforms contain the beta domain or not, with the total expression of the beta domain-lacking isoforms vastly exceeding that of the beta domain-containing isoforms. Isoforms containing the beta domain are expressed primarily in skeletal and cardiac muscle and in brain. Also present in lung and testis. Splicing to include the beta domain is induced in differentiating myocytes. Isoforms lacking the beta domain are expressed less abundantly in skeletal muscle, brain and lymphocytes, and are uniquely found in ovary, liver, spleen and kidney. In embryos, the beta domain-containing and beta domain-lacking isoforms are equally expressed. Also expressed cerebellar granule neurons and other regions of the CNS. Highest levels in the olfactory bulb, cortex, hippocampus, thalamus and cerebellum.

Its subcellular location is the nucleus. In terms of biological role, transcriptional activator which binds specifically to the MEF2 element, 5'-YTA[AT](4)TAR-3', found in numerous muscle-specific, growth factor- and stress-induced genes. Mediates cellular functions not only in skeletal and cardiac muscle development, but also in neuronal differentiation and survival. Plays diverse roles in the control of cell growth, survival and apoptosis via p38 MAPK signaling in muscle-specific and/or growth factor-related transcription. Plays a critical role in the regulation of neuronal apoptosis. In Mus musculus (Mouse), this protein is Myocyte-specific enhancer factor 2D (Mef2d).